The primary structure comprises 298 residues: GTP cyclohydrolase FolE2 (298 aa).

It belongs to the GTP cyclohydrolase IV family.

It catalyses the reaction GTP + H2O = 7,8-dihydroneopterin 3'-triphosphate + formate + H(+). It participates in cofactor biosynthesis; 7,8-dihydroneopterin triphosphate biosynthesis; 7,8-dihydroneopterin triphosphate from GTP: step 1/1. Converts GTP to 7,8-dihydroneopterin triphosphate. In Xylella fastidiosa (strain 9a5c), this protein is GTP cyclohydrolase FolE2.